The chain runs to 119 residues: Ribonuclease P protein component (119 aa).

The protein belongs to the RnpA family. As to quaternary structure, consists of a catalytic RNA component (M1 or rnpB) and a protein subunit.

The enzyme catalyses Endonucleolytic cleavage of RNA, removing 5'-extranucleotides from tRNA precursor.. In terms of biological role, RNaseP catalyzes the removal of the 5'-leader sequence from pre-tRNA to produce the mature 5'-terminus. It can also cleave other RNA substrates such as 4.5S RNA. The protein component plays an auxiliary but essential role in vivo by binding to the 5'-leader sequence and broadening the substrate specificity of the ribozyme. This chain is Ribonuclease P protein component, found in Edwardsiella ictaluri (strain 93-146).